We begin with the raw amino-acid sequence, 396 residues long: Multidrug efflux protein YfmO (396 aa).

Helical transmembrane passes span 20 to 40 (VWAV…VDPI), 56 to 76 (SLLF…SGAI), 80 to 100 (IGAK…AGLG), 114 to 134 (GGWG…IVGV), 142 to 162 (AIIL…LAGG), 171 to 191 (APFF…SFML), 214 to 234 (GLLT…ILLA), 249 to 269 (YVFF…APLV), 278 to 298 (SLVV…IWTD), 301 to 321 (TLII…NTIM), 339 to 359 (AYSS…GMLS), and 364 to 384 (ASTP…VLLM).

Belongs to the major facilitator superfamily.

The protein resides in the cell membrane. Functionally, acts to efflux copper or a copper complex. It is possible that YfmO could contribute to copper resistance. The sequence is that of Multidrug efflux protein YfmO (yfmO) from Bacillus subtilis (strain 168).